The following is a 365-amino-acid chain: NADH-quinone oxidoreductase subunit H (365 aa).

8 consecutive transmembrane segments (helical) span residues 27–47 (LLLILAIIIPLLLAVAYLTFA), 99–119 (FLFLLAPILAITPALAAWAVV), 133–153 (ALLYILAMTSLGVYGVIIAGW), 168–188 (AAQVISYELAMGFALVCVLMM), 206–226 (FLNWYMIPLFPMFLVYFISGV), 268–288 (ILVATLASIMFLGGWLPPVDI), 294–314 (IPGVVWLLLKIAIMLFFFLWF), and 329–349 (LGWKVFIPITLIWIVLLGAVM).

This sequence belongs to the complex I subunit 1 family. In terms of assembly, NDH-1 is composed of 14 different subunits. Subunits NuoA, H, J, K, L, M, N constitute the membrane sector of the complex.

Its subcellular location is the cell inner membrane. It catalyses the reaction a quinone + NADH + 5 H(+)(in) = a quinol + NAD(+) + 4 H(+)(out). In terms of biological role, NDH-1 shuttles electrons from NADH, via FMN and iron-sulfur (Fe-S) centers, to quinones in the respiratory chain. The immediate electron acceptor for the enzyme in this species is believed to be ubiquinone. Couples the redox reaction to proton translocation (for every two electrons transferred, four hydrogen ions are translocated across the cytoplasmic membrane), and thus conserves the redox energy in a proton gradient. This subunit may bind ubiquinone. The protein is NADH-quinone oxidoreductase subunit H of Nitrosomonas eutropha (strain DSM 101675 / C91 / Nm57).